A 444-amino-acid chain; its full sequence is Gustatory receptor 5a for trehalose (444 aa).

The Cytoplasmic portion of the chain corresponds to 1–56 (MRQLKGRNRCNRAVRHLKIQGKMWLKNLKSGLEQIRESQVRGTRKNFLHDGSFHEA). Residues 57–77 (VAPVLAVAQCFCLMPVCGISA) traverse the membrane as a helical segment. Residues 78-178 (PTYRGLSFNR…RARPARRLKL (101 aa)) are Extracellular-facing. The chain crosses the membrane as a helical span at residues 179–199 (VAFVLLVVSLMEHLLSIISVV). Residues 200-214 (YYDFCPRRSDPVESY) lie on the Cytoplasmic side of the membrane. Residues 215 to 235 (LLGASAQLFEVFPYSNWLAWL) traverse the membrane as a helical segment. Residues 236-240 (GKIQN) are Extracellular-facing. The chain crosses the membrane as a helical span at residues 241–261 (VLLTFGWSYMDIFLMMLGMGL). The Cytoplasmic segment spans residues 262–305 (SEMLARLNRSLEQQVRQPMPEAYWTWSRTLYRSIVELIREVDDA). Residues 306–326 (VSGIMLISFGSNLYFICLQLL) traverse the membrane as a helical segment. Over 327–338 (KSINTMPSSAHA) the chain is Extracellular. The chain crosses the membrane as a helical span at residues 339–359 (VYFYFSLLFLLSRSTAVLLFV). Over 360–410 (SAINDQAREPLRLLRLVPLKGYHPEVFRFAAELASDQVALTGLKFFNVTRK) the chain is Cytoplasmic. The chain crosses the membrane as a helical span at residues 411–431 (LFLAMAGTVATYELVLIQFHE). Topologically, residues 432-444 (DKKTWDCSPFNLD) are extracellular.

This sequence belongs to the insect chemoreceptor superfamily. Gustatory receptor (GR) family. Gr5a subfamily. Expressed in labellar chemosensory neurons.

It is found in the cell membrane. Functionally, gustatory receptor required for response to the sugar trehalose in taste neurons. Gr5a neurons selectively respond to sugars, in contrast to Gr66a cells which respond to bitter compounds. Flies are attracted to sugars and avoid bitter substances, suggesting that Gr5a neuron activity is sufficient to mediate acceptance behavior. Sugar signal transduction occurs through coupling with G-proteins such as Galpha49B and G-salpha60A. The polypeptide is Gustatory receptor 5a for trehalose (Gr5a) (Drosophila melanogaster (Fruit fly)).